Here is a 216-residue protein sequence, read N- to C-terminus: Hexitol phosphatase A (216 aa).

Aspartate 9 acts as the Nucleophile in catalysis. Aspartate 9 and aspartate 11 together coordinate a divalent metal cation. Substrate-binding positions include 9–11 (DLD), 106–107 (TS), and lysine 138. Aspartate 11 functions as the Proton donor in the catalytic mechanism. Aspartate 163 provides a ligand contact to a divalent metal cation.

Belongs to the HAD-like hydrolase superfamily. CbbY/CbbZ/Gph/YieH family. The cofactor is Mg(2+). Requires Mn(2+) as cofactor. It depends on Co(2+) as a cofactor.

It catalyses the reaction sugar phosphate + H2O = sugar + phosphate.. It carries out the reaction D-mannitol 1-phosphate + H2O = D-mannitol + phosphate. The enzyme catalyses D-sorbitol 6-phosphate + H2O = D-sorbitol + phosphate. Functionally, sugar-phosphate phosphohydrolase that appears to contribute to butanol tolerance. Catalyzes the dephosphorylation of D-mannitol 1-phosphate and D-sorbitol 6-phosphate. Is also able to dephosphorylate other sugar phosphates in vitro including ribose-5-phosphate (Rib5P), 2-deoxyribose-5-phosphate, fructose-1-phosphate (Fru1P), fructose-6-phosphate (Fru6P), and glucose-6-phosphate (Glu6P). Selectively hydrolyzes beta-D-glucose-1-phosphate (bGlu1P) and has no activity with the alpha form. This chain is Hexitol phosphatase A, found in Escherichia coli (strain K12).